Reading from the N-terminus, the 399-residue chain is tRNA-specific 2-thiouridylase MnmA (399 aa).

Residues 7–14 (AMSGGVDS) and Met-33 each bind ATP. Cys-128 serves as the catalytic Nucleophile. Cys-128 and Cys-224 are oxidised to a cystine. Position 152 (Gly-152) interacts with ATP. An interaction with tRNA region spans residues 174-176 (KDQ). Residue Cys-224 is the Cysteine persulfide intermediate of the active site. The interaction with tRNA stretch occupies residues 333-334 (RY).

The protein belongs to the MnmA/TRMU family.

The protein localises to the cytoplasm. The catalysed reaction is S-sulfanyl-L-cysteinyl-[protein] + uridine(34) in tRNA + AH2 + ATP = 2-thiouridine(34) in tRNA + L-cysteinyl-[protein] + A + AMP + diphosphate + H(+). Its function is as follows. Catalyzes the 2-thiolation of uridine at the wobble position (U34) of tRNA, leading to the formation of s(2)U34. This chain is tRNA-specific 2-thiouridylase MnmA, found in Rhodopirellula baltica (strain DSM 10527 / NCIMB 13988 / SH1).